We begin with the raw amino-acid sequence, 242 residues long: Uridylate kinase (242 aa).

Residues 15–18, Gly-58, and Arg-62 contribute to the ATP site; that span reads KISG. UMP-binding positions include Asp-77 and 139-146; that span reads TGNPFFTT. 3 residues coordinate ATP: Thr-166, Tyr-172, and Asp-175.

It belongs to the UMP kinase family. Homohexamer.

It localises to the cytoplasm. The catalysed reaction is UMP + ATP = UDP + ADP. It functions in the pathway pyrimidine metabolism; CTP biosynthesis via de novo pathway; UDP from UMP (UMPK route): step 1/1. Inhibited by UTP. Functionally, catalyzes the reversible phosphorylation of UMP to UDP. In Buchnera aphidicola subsp. Acyrthosiphon pisum (strain APS) (Acyrthosiphon pisum symbiotic bacterium), this protein is Uridylate kinase.